A 3637-amino-acid polypeptide reads, in one-letter code: Replicase polyprotein 1ab (3637 aa).

Residues 8–28 form a C4-type; atypical zinc finger; it reads CLCTPNARVFWERGQVYCTRC. Residues 69-181 form the Peptidase C31 domain; sequence ECRPGGMCWL…KGLCPFADAR (113 aa). The interval 69–183 is PCP1-alpha; that stretch reads ECRPGGMCWL…LCPFADARAN (115 aa). Catalysis depends on for Nsp1-alpha papain-like cysteine proteinase activity residues cysteine 76 and histidine 147. The interval 262 to 380 is PCP1-beta; that stretch reads RDTKFSKCWE…KFRFQTRKYY (119 aa). The Peptidase C32 domain maps to 262–381; sequence RDTKFSKCWE…FRFQTRKYYG (120 aa). Catalysis depends on for Nsp1-beta papain-like cysteine proteinase activity residues cysteine 269 and histidine 340. The region spanning 381 to 486 is the Peptidase C33 domain; sequence GYSPPGDGAC…RGVCGECEMG (106 aa). Active-site for Nsp2 cysteine proteinase activity residues include cysteine 390 and histidine 456. 2 disordered regions span residues 676–743 and 865–899; these read CKPK…AALK and QQKT…GVSL. Over residues 678–689 the composition is skewed to basic residues; the sequence is PKRKRSRKKKTR. 2 stretches are compositionally biased toward basic and acidic residues: residues 714-727 and 873-895; these read DTRE…KAEK and GERE…KRDL. The next 7 helical transmembrane spans lie at 940–960, 981–1001, 1083–1103, 1287–1307, 1362–1382, 1390–1410, and 1423–1443; these read WLNH…SFIF, VLLC…CVFG, FYFL…AVAL, IADF…SAWL, ALMV…SLLV, CLLM…PFVL, and VQFF…VVLI. Positions 979–1103 are HD1; the sequence is CCVLLCFYLP…LGLVFLAVAL (125 aa). Positions 1287–1446 are HD2; sequence IADFVCLGLY…ASVVVLISSW (160 aa). The Peptidase S32 domain maps to 1511 to 1712; sequence GSLRTRGCAK…AVVESLPALE (202 aa). Residues histidine 1549, aspartate 1574, and serine 1626 each act as charge relay system; for 3C-like serine proteinase activity in the active site. The next 5 helical transmembrane spans lie at 1735–1755, 1761–1781, 1801–1821, 1824–1844, and 1853–1873; these read DVPV…VMLA, FALS…AVAF, LVIA…LGQL, CCLM…LYLG, and EIFF…SLFK. Positions 1735–1872 are HD3; it reads DVPVIRIAFF…MFLPLFLSLF (138 aa). Residues 2214-2372 enclose the NiRAN domain; the sequence is SLNGLQQASA…LPYKLHPVRG (159 aa). The region spanning 2611-2745 is the RdRp catalytic domain; that stretch reads GRCLEADLAS…YDESSELPNY (135 aa). Positions 2865–2928 constitute an AV ZBD domain; that stretch reads KKKCRTCAHC…SPVMSLNTEL (64 aa). Positions 2871, 2874, 2884, 2889, 2892, 2894, 2896, 2898, 2905, 2907, 2914, and 2917 each coordinate Zn(2+). One can recognise a (+)RNA virus helicase ATP-binding domain in the interval 2985–3137; it reads QVMKVAQTCA…AFALMLGRQL (153 aa). 3013–3020 contributes to the ATP binding site; that stretch reads GAPGTGKT. Residues 3138–3269 form the (+)RNA virus helicase C-terminal domain; that stretch reads IEVFRFGPSI…CGEQPMMISE (132 aa). Positions 3293–3389 constitute an AV-Nsp11N/CoV-Nsp15M domain; that stretch reads EGTASPLPQV…LTKFLKGKPV (97 aa). Residues 3391–3513 form the NendoU domain; sequence LPDSLMSTGR…MVWKDATAYF (123 aa). Active-site residues include histidine 3422, histidine 3437, and lysine 3466.

It belongs to the arteriviridae polyprotein family. In terms of processing, specific enzymatic cleavages in vivo by its own proteases yield mature proteins. There are two alternative pathways for processing. Either nsp4-5 is cleaved, which represents the major pathway or the nsp5-6 and nsp6-7 are processed, which represents the minor pathway. The major pathway occurs when nsp2 acts as a cofactor for nsp4.

It localises to the host membrane. Its subcellular location is the host cytoplasm. The protein localises to the host perinuclear region. The catalysed reaction is RNA(n) + a ribonucleoside 5'-triphosphate = RNA(n+1) + diphosphate. The enzyme catalyses ATP + H2O = ADP + phosphate + H(+). It carries out the reaction uridylyl-uridylyl-ribonucleotide-RNA = a 3'-end uridylyl-2',3'-cyclophospho-uridine-RNA + a 5'-end dephospho-ribonucleoside-RNA. In terms of biological role, the replicase polyprotein 1ab is a multifunctional protein: it contains the activities necessary for the transcription of negative stranded RNA, leader RNA, subgenomic mRNAs and progeny virion RNA as well as proteinases responsible for the cleavage of the polyprotein into functional products. Its function is as follows. The Nsp1 chain is essential for viral subgenomic mRNA synthesis. The 3C-like serine proteinase chain is responsible for the majority of cleavages as it cleaves the C-terminus of the polyprotein. Functionally, the helicase chain, which contains a zinc finger structure, displays RNA and DNA duplex-unwinding activities with 5' to 3' polarity. In terms of biological role, plays a role in viral transcription/replication and prevents the simultaneous activation of host cell dsRNA sensors, such as MDA5/IFIH1, OAS, and PKR. Acts by degrading the 5'-polyuridines generated during replication of the poly(A) region of viral genomic and subgenomic RNAs. Catalyzes a two-step reaction in which a 2'3'-cyclic phosphate (2'3'-cP) is first generated by 2'-O transesterification, which is then hydrolyzed to a 3'-phosphate (3'-P). If not degraded, poly(U) RNA would hybridize with poly(A) RNA tails and activate host dsRNA sensors. This Mus musculus domesticus (western European house mouse) protein is Replicase polyprotein 1ab (rep).